The sequence spans 100 residues: Glyceraldehyde-3-phosphate dehydrogenase, testis-specific (100 aa).

NAD(+) is bound by residues D39 and T64. R89 is a D-glyceraldehyde 3-phosphate binding site.

This sequence belongs to the glyceraldehyde-3-phosphate dehydrogenase family. Homotetramer.

It localises to the cytoplasm. It catalyses the reaction D-glyceraldehyde 3-phosphate + phosphate + NAD(+) = (2R)-3-phospho-glyceroyl phosphate + NADH + H(+). The protein operates within carbohydrate degradation; glycolysis; pyruvate from D-glyceraldehyde 3-phosphate: step 1/5. Functionally, may play an important role in regulating the switch between different pathways for energy production during spermiogenesis and in the spermatozoon. Required for sperm motility and male fertility. The protein is Glyceraldehyde-3-phosphate dehydrogenase, testis-specific of Mesocricetus auratus (Golden hamster).